A 632-amino-acid chain; its full sequence is DNA mismatch repair protein MutL (632 aa).

The protein belongs to the DNA mismatch repair MutL/HexB family.

Functionally, this protein is involved in the repair of mismatches in DNA. It is required for dam-dependent methyl-directed DNA mismatch repair. May act as a 'molecular matchmaker', a protein that promotes the formation of a stable complex between two or more DNA-binding proteins in an ATP-dependent manner without itself being part of a final effector complex. In Pseudomonas putida (strain GB-1), this protein is DNA mismatch repair protein MutL.